Here is a 105-residue protein sequence, read N- to C-terminus: Flagellar transcriptional regulator FlhD (105 aa).

Belongs to the FlhD family. Homodimer; disulfide-linked. Forms a heterohexamer composed of two FlhC and four FlhD subunits. Each FlhC binds a FlhD dimer, forming a heterotrimer, and a hexamer assembles by dimerization of two heterotrimers.

The protein resides in the cytoplasm. In terms of biological role, functions in complex with FlhC as a master transcriptional regulator that regulates transcription of several flagellar and non-flagellar operons by binding to their promoter region. Activates expression of class 2 flagellar genes, including fliA, which is a flagellum-specific sigma factor that turns on the class 3 genes. Also regulates genes whose products function in a variety of physiological pathways. This chain is Flagellar transcriptional regulator FlhD, found in Nitrosomonas europaea (strain ATCC 19718 / CIP 103999 / KCTC 2705 / NBRC 14298).